We begin with the raw amino-acid sequence, 454 residues long: DNA repair protein RadA (454 aa).

The C4-type zinc-finger motif lies at 11–28 (CTECGTHSPKWLGQCSGC). Residue 94-101 (GEPGIGKS) coordinates ATP. The short motif at 251–255 (KNRFG) is the RadA KNRFG motif element. The lon-protease-like stretch occupies residues 350–454 (DVFLSIAGGL…TIKDAVRLLQ (105 aa)).

It belongs to the RecA family. RadA subfamily.

Functionally, DNA-dependent ATPase involved in processing of recombination intermediates, plays a role in repairing DNA breaks. Stimulates the branch migration of RecA-mediated strand transfer reactions, allowing the 3' invading strand to extend heteroduplex DNA faster. Binds ssDNA in the presence of ADP but not other nucleotides, has ATPase activity that is stimulated by ssDNA and various branched DNA structures, but inhibited by SSB. Does not have RecA's homology-searching function. This Chlamydia trachomatis serovar D (strain ATCC VR-885 / DSM 19411 / UW-3/Cx) protein is DNA repair protein RadA.